A 282-amino-acid chain; its full sequence is Bis(5'-nucleosyl)-tetraphosphatase, symmetrical (282 aa).

This sequence belongs to the Ap4A hydrolase family.

It carries out the reaction P(1),P(4)-bis(5'-adenosyl) tetraphosphate + H2O = 2 ADP + 2 H(+). In terms of biological role, hydrolyzes diadenosine 5',5'''-P1,P4-tetraphosphate to yield ADP. The chain is Bis(5'-nucleosyl)-tetraphosphatase, symmetrical from Escherichia coli O7:K1 (strain IAI39 / ExPEC).